Consider the following 246-residue polypeptide: Serine protease 1 (246 aa).

A signal peptide spans 1–17; sequence MKTFIFLALLGAAVAFP. A propeptide spans 18-23 (activation peptide); sequence VDDDDK. The 221-residue stretch at 24–244 folds into the Peptidase S1 domain; that stretch reads IVGGYTCGAN…YVSWIKQTIA (221 aa). Cystine bridges form between Cys-30/Cys-160, Cys-48/Cys-64, Cys-132/Cys-233, Cys-139/Cys-206, Cys-171/Cys-185, and Cys-196/Cys-220. The Charge relay system role is filled by His-63. Positions 75, 77, 80, and 85 each coordinate Ca(2+). Residue Asp-107 is the Charge relay system of the active site. Substrate contacts are provided by residues 194–195, 197–198, and Ser-200; these read DS and QG. The Charge relay system role is filled by Ser-200.

The protein belongs to the peptidase S1 family. In terms of assembly, interacts with SERPINA1. Requires Ca(2+) as cofactor. Post-translationally, autocatalytic cleavage after Lys-23 leads to beta-trypsin by releasing a terminal hexapeptide. Subsequent cleavage after Lys-148 leads to alpha-trypsin. Further cleavage after Lys-193 yields pseudotrypsin. A cleavage may also occur after Arg-122. Not sulfated on tyrosine residue(s). As to expression, synthesized in the acinar cells of the pancreas.

Its subcellular location is the secreted. It localises to the extracellular space. It catalyses the reaction Preferential cleavage: Arg-|-Xaa, Lys-|-Xaa.. With respect to regulation, is inhibited by scorpion cyclotide trypsin inhibitor TopI1. This Bos taurus (Bovine) protein is Serine protease 1 (PRSS1).